We begin with the raw amino-acid sequence, 651 residues long: E3 SUMO-protein ligase PIAS1 (651 aa).

Ala-2 carries the post-translational modification N-acetylalanine. Positions 2–200 (ADSAELKQMV…KCDFTVQVQL (199 aa)) are required for interaction with MSX1. In terms of domain architecture, SAP spans 11 to 45 (VMSLRVSELQVLLGYAGRNKHGRKHELLTKALHLL). The LXXLL motif motif lies at 19–23 (LQVLL). Residues Lys-40 and Lys-46 each participate in a glycyl lysine isopeptide (Lys-Gly) (interchain with G-Cter in SUMO2) cross-link. The Nuclear localization signal motif lies at 56–64 (KIKELYRRR). The PINIT domain maps to 124-288 (HLTSALHPVH…SMAVYLVKQL (165 aa)). Glycyl lysine isopeptide (Lys-Gly) (interchain with G-Cter in SUMO2) cross-links involve residues Lys-137 and Lys-238. Residues 320-405 (PDSEIATTSL…LKYCTDCDEI (86 aa)) form an SP-RING-type zinc finger. Positions 351, 353, 374, and 377 each coordinate Zn(2+). The Nuclear localization signal signature appears at 368–380 (KKPTWVCPVCDKK). Residue Lys-453 forms a Glycyl lysine isopeptide (Lys-Gly) (interchain with G-Cter in SUMO2) linkage. The segment at 462-473 (LTIDSSSDEEEE) is SUMO1-binding. Residues 465–511 (DSSSDEEEEEPSAKRTCPSLSPTSPLNNKGILSLPHQASPVSRTPSL) are disordered. Phosphoserine occurs at positions 467, 468, 483, and 485. Residues 482-491 (PSLSPTSPLN) show a composition bias toward polar residues. Thr-487 carries the phosphothreonine modification. Ser-488 carries the phosphoserine modification. Residue Lys-493 forms a Glycyl lysine isopeptide (Lys-Gly) (interchain with G-Cter in SUMO2) linkage. Phosphoserine is present on residues Ser-503, Ser-510, and Ser-522. 2 repeat units span residues 520–523 (NTSL) and 557–560 (NTSL). The segment at 520–615 (NTSLIQDYRH…GSSSGSNSSL (96 aa)) is 4 X 4 AA repeats of N-T-S-L. Residues 598–601 (STSL) form a 3; approximate repeat. Low complexity predominate over residues 599–621 (TSLPTTNGSSSGSNSSLVSSNSL). Residues 599–632 (TSLPTTNGSSSGSNSSLVSSNSLRESHSHTVTNR) are disordered. The stretch at 612–615 (NSSL) is one 4; approximate repeat.

This sequence belongs to the PIAS family. In terms of assembly, interacts with NCOA2 and AR. Interacts with NR2C1; the interaction promotes its sumoylation. Interacts with DDX21, CSRP2, AXIN1, JUN, UBE2I, SUMO1, SATB2, PLAG1, TP53 and STAT1 (dimer), following IFNA1-stimulation. Interacts with SP3 (preferentially when SUMO-modified). Interacts with KLF8; the interaction results in SUMO ligation and repression of KLF8 transcriptional activity and of its cell cycle progression into G(1) phase. Interacts with CHUK/IKKA; this interaction induces PIAS1 phosphorylation. Interacts with PTK2/FAK1; the interaction promotes its sumoylation. Interacts with DDX5. Interacts with PML. Interacts with MTA1. Interacts with SUMO1P1/SUMO5. Interacts with PRDM1/Blimp-1. Interacts (via N-terminus) with MSX1 (via C-terminus); the interaction is required for the localization of both proteins to the nuclear periphery and specific binding of MSX1 to the core enhancer region in target gene promoters. (Microbial infection) Interacts with ebolavirus VP35; this interaction mediates the sumoylation of IRF7 and contributes to the viral inhibition of IFN-type I production. Post-translationally, sumoylated. As to expression, expressed in numerous tissues with highest level in testis.

Its subcellular location is the nucleus. It is found in the nucleus speckle. The protein localises to the PML body. It localises to the cytoplasm. The protein resides in the cytoskeleton. The protein operates within protein modification; protein sumoylation. Functions as an E3-type small ubiquitin-like modifier (SUMO) ligase, stabilizing the interaction between UBE2I and the substrate, and as a SUMO-tethering factor. Catalyzes sumoylation of various proteins, such as CEBPB, MRE11, MTA1, PTK2 and PML. Plays a crucial role as a transcriptional coregulation in various cellular pathways, including the STAT pathway, the p53 pathway and the steroid hormone signaling pathway. In vitro, binds A/T-rich DNA. The effects of this transcriptional coregulation, transactivation or silencing, may vary depending upon the biological context. Mediates sumoylation of MRE11, stabilizing MRE11 on chromatin during end resection. Sumoylates PML (at 'Lys-65' and 'Lys-160') and PML-RAR and promotes their ubiquitin-mediated degradation. PIAS1-mediated sumoylation of PML promotes its interaction with CSNK2A1/CK2 which in turn promotes PML phosphorylation and degradation. Enhances the sumoylation of MTA1 and may participate in its paralog-selective sumoylation. Plays a dynamic role in adipogenesis by promoting the SUMOylation and degradation of CEBPB. Mediates the nuclear mobility and localization of MSX1 to the nuclear periphery, whereby MSX1 is brought into the proximity of target myoblast differentiation factor genes. Also required for the binding of MSX1 to the core enhancer region in target gene promoter regions, independent of its sumoylation activity. Capable of binding to the core enhancer region TAAT box in the MYOD1 gene promoter. Its function is as follows. (Microbial infection) Restricts Epstein-Barr virus (EBV) lytic replication by acting as an inhibitor for transcription factors involved in lytic gene expression. The virus can use apoptotic caspases to antagonize PIAS1-mediated restriction and express its lytic genes. The protein is E3 SUMO-protein ligase PIAS1 (PIAS1) of Homo sapiens (Human).